Here is a 320-residue protein sequence, read N- to C-terminus: Meso-diaminopimelate D-dehydrogenase (320 aa).

NADP(+)-binding positions include Tyr-11–Leu-14, Ser-35–Arg-37, Cys-65–Ser-68, Thr-88–Asp-90, and Thr-117–Pro-121. Residues Asp-90, Asp-120, Trp-144, Gln-150–Gly-151, Thr-169, Arg-195, His-244, and Asn-270 contribute to the substrate site.

In terms of assembly, homodimer.

It carries out the reaction meso-2,6-diaminopimelate + NADP(+) + H2O = (S)-2-amino-6-oxoheptanedioate + NH4(+) + NADPH + H(+). It functions in the pathway amino-acid biosynthesis; L-lysine biosynthesis via DAP pathway; DL-2,6-diaminopimelate from (S)-tetrahydrodipicolinate: step 1/1. Its activity is regulated as follows. L,L-2,6-diaminopimelate and D,D-2,6-diaminopimelate competitively inhibit the oxidative deamination of meso-2,6-diaminopimelate. The enzyme is also inhibited by L-cysteine, and by p-chloromercuribenzoate, iodoacetic acid and HgCl(2) in vitro. Functionally, catalyzes the reversible NADPH-dependent reductive amination of L-2-amino-6-oxopimelate, the acyclic form of L-tetrahydrodipicolinate, to generate the meso compound, D,L-2,6-diaminopimelate. Probably plays a role in lysine biosynthesis. Exhibits a high substrate specificity for meso-2,6-diaminopimelate, since L,L-2,6-diaminopimelate, D,D-2,6-diaminopimelate, L-glutamate, L-alanine, L-leucine, L-valine, L-aspartate, L-threonine, L-homoserine, L-methionine, L-lysine, L-serine, L-phenylalanine, L-tyrosine, L-tryptophan, L-ornithine, L-histidine, L-arginine, D-glutamate, and D-alanine are not substrates for the oxidative deamination reaction. Can use NAD(+) only poorly since the activity observed in the presence of NAD(+) is about 3% of that with NADP(+). This is Meso-diaminopimelate D-dehydrogenase (ddh) from Corynebacterium glutamicum (strain ATCC 13032 / DSM 20300 / JCM 1318 / BCRC 11384 / CCUG 27702 / LMG 3730 / NBRC 12168 / NCIMB 10025 / NRRL B-2784 / 534).